The primary structure comprises 100 residues: NADH-quinone oxidoreductase subunit K (100 aa).

3 helical membrane-spanning segments follow: residues 4–24 (TSYY…GVLI), 29–49 (LVLF…LVTF), and 60–80 (IVVF…LALL).

Belongs to the complex I subunit 4L family. NDH-1 is composed of 14 different subunits. Subunits NuoA, H, J, K, L, M, N constitute the membrane sector of the complex.

It localises to the cell membrane. The enzyme catalyses a quinone + NADH + 5 H(+)(in) = a quinol + NAD(+) + 4 H(+)(out). In terms of biological role, NDH-1 shuttles electrons from NADH, via FMN and iron-sulfur (Fe-S) centers, to quinones in the respiratory chain. The immediate electron acceptor for the enzyme in this species is believed to be ubiquinone. Couples the redox reaction to proton translocation (for every two electrons transferred, four hydrogen ions are translocated across the cytoplasmic membrane), and thus conserves the redox energy in a proton gradient. The chain is NADH-quinone oxidoreductase subunit K from Roseiflexus sp. (strain RS-1).